The sequence spans 85 residues: Large ribosomal subunit protein bL27 (85 aa).

This sequence belongs to the bacterial ribosomal protein bL27 family.

In Campylobacter fetus subsp. fetus (strain 82-40), this protein is Large ribosomal subunit protein bL27.